A 399-amino-acid chain; its full sequence is Succinate--CoA ligase [ADP-forming] subunit beta (399 aa).

Residues 9-254 (KQVLAKYGVP…EDEEDPMELE (246 aa)) enclose the ATP-grasp domain. Residues K46, 53 to 55 (GRG), E109, C112, and E117 each bind ATP. N209 and D223 together coordinate Mg(2+). Substrate-binding positions include N274 and 331–333 (GIM).

This sequence belongs to the succinate/malate CoA ligase beta subunit family. In terms of assembly, heterotetramer of two alpha and two beta subunits. Requires Mg(2+) as cofactor.

The catalysed reaction is succinate + ATP + CoA = succinyl-CoA + ADP + phosphate. The enzyme catalyses GTP + succinate + CoA = succinyl-CoA + GDP + phosphate. It functions in the pathway carbohydrate metabolism; tricarboxylic acid cycle; succinate from succinyl-CoA (ligase route): step 1/1. Succinyl-CoA synthetase functions in the citric acid cycle (TCA), coupling the hydrolysis of succinyl-CoA to the synthesis of either ATP or GTP and thus represents the only step of substrate-level phosphorylation in the TCA. The beta subunit provides nucleotide specificity of the enzyme and binds the substrate succinate, while the binding sites for coenzyme A and phosphate are found in the alpha subunit. The protein is Succinate--CoA ligase [ADP-forming] subunit beta of Rhodospirillum rubrum (strain ATCC 11170 / ATH 1.1.1 / DSM 467 / LMG 4362 / NCIMB 8255 / S1).